Here is a 184-residue protein sequence, read N- to C-terminus: ATP-dependent protease subunit HslV (184 aa).

T11 is an active-site residue. Residues A165, C168, and T171 each coordinate Na(+).

The protein belongs to the peptidase T1B family. HslV subfamily. A double ring-shaped homohexamer of HslV is capped on each side by a ring-shaped HslU homohexamer. The assembly of the HslU/HslV complex is dependent on binding of ATP.

The protein resides in the cytoplasm. The catalysed reaction is ATP-dependent cleavage of peptide bonds with broad specificity.. Allosterically activated by HslU binding. In terms of biological role, protease subunit of a proteasome-like degradation complex believed to be a general protein degrading machinery. The protein is ATP-dependent protease subunit HslV of Zymomonas mobilis subsp. mobilis (strain ATCC 31821 / ZM4 / CP4).